Reading from the N-terminus, the 104-residue chain is Cytochrome c-552 (104 aa).

An N-terminal signal peptide occupies residues 1 to 23 (MHLHLRGICLVLAVASSSSSALA). Cys-37, Cys-40, His-41, and Met-82 together coordinate heme c.

The protein belongs to the cytochrome c family. Monoheme monomer. Has the tendency to dimerize. Binds 1 heme c group covalently per subunit.

The protein localises to the periplasm. This chain is Cytochrome c-552 (cycB), found in Bradyrhizobium diazoefficiens (strain JCM 10833 / BCRC 13528 / IAM 13628 / NBRC 14792 / USDA 110).